A 153-amino-acid polypeptide reads, in one-letter code: 6,7-dimethyl-8-ribityllumazine synthase (153 aa).

Residues phenylalanine 22, 56 to 58, and 80 to 82 contribute to the 5-amino-6-(D-ribitylamino)uracil site; these read AFE and AVI. 85–86 lines the (2S)-2-hydroxy-3-oxobutyl phosphate pocket; it reads ST. The Proton donor role is filled by histidine 88. A 5-amino-6-(D-ribitylamino)uracil-binding site is contributed by phenylalanine 113. Position 127 (arginine 127) interacts with (2S)-2-hydroxy-3-oxobutyl phosphate.

This sequence belongs to the DMRL synthase family.

It catalyses the reaction (2S)-2-hydroxy-3-oxobutyl phosphate + 5-amino-6-(D-ribitylamino)uracil = 6,7-dimethyl-8-(1-D-ribityl)lumazine + phosphate + 2 H2O + H(+). It participates in cofactor biosynthesis; riboflavin biosynthesis; riboflavin from 2-hydroxy-3-oxobutyl phosphate and 5-amino-6-(D-ribitylamino)uracil: step 1/2. Functionally, catalyzes the formation of 6,7-dimethyl-8-ribityllumazine by condensation of 5-amino-6-(D-ribitylamino)uracil with 3,4-dihydroxy-2-butanone 4-phosphate. This is the penultimate step in the biosynthesis of riboflavin. The polypeptide is 6,7-dimethyl-8-ribityllumazine synthase (Clostridium botulinum (strain Alaska E43 / Type E3)).